Consider the following 130-residue polypeptide: Keratin-associated protein 12-1 (130 aa).

A run of 14 repeats spans residues 10-14 (CQPSC), 15-29 (CVSSSCQPSCCVSSP), 34-38 (CFVSS), 40-44 (CQPSC), 45-49 (CVSSS), 60-64 (CIPVR), 85-89 (CQSSV), 90-94 (CVPVS), 95-99 (CRPVC), 104-108 (CQSSG), 109-113 (CCQPS), 114-118 (CPTLV), 119-123 (CKPVT), and 124-128 (CSNPS). A 14 X 5 AA approximate repeats region spans residues 10 to 128 (CQPSCCVSSS…CKPVTCSNPS (119 aa)).

This sequence belongs to the KRTAP type 12 family. In terms of assembly, interacts with hair keratins. Expressed only in the head and back skin of a 3 day old mouse. Not expressed in adult skin.

Functionally, in the hair cortex, hair keratin intermediate filaments are embedded in an interfilamentous matrix, consisting of hair keratin-associated proteins (KRTAP), which are essential for the formation of a rigid and resistant hair shaft through their extensive disulfide bond cross-linking with abundant cysteine residues of hair keratins. The matrix proteins include the high-sulfur and high-glycine-tyrosine keratins. In Mus musculus (Mouse), this protein is Keratin-associated protein 12-1.